Reading from the N-terminus, the 382-residue chain is MGDWSALGKLLDKVQAYSTAGGKVWLSVLFIFRILLLGTAVESAWGDEQSAFRCNTQQPGCENVCYDKSFPISHVRFWVLQIIFVSVPTLLYLAHVFYVMRKEEKLNKKEEELKVAQTDGVNVDMHLKQIEIKKFKYGIEEHGKVKMRGGLLRTYIISILFKSIFEVAFLLIQWYIYGFSLSAVYTCKRDPCPHQVDCFLSRPTEKTIFIIFMLVVSLVSLALNIIELFYVFFKGVKDRVKGKSDPYHATSGALSPAKDCGSQKYAYFNGCSSPTAPLSPMSPPGYKLVTGDRNNSSCRNYNKQASEQNWANYSAEQNRMGQAGSTISNSHAQPFDFPDDNQNSKKLAAGHELQPLAIVDQRPSSRASSRASSRPRPDDLEI.

Residues 2–23 (GDWSALGKLLDKVQAYSTAGGK) are Cytoplasmic-facing. At serine 5 the chain carries Phosphoserine. Residues 24 to 44 (VWLSVLFIFRILLLGTAVESA) form a helical membrane-spanning segment. Residues 45 to 76 (WGDEQSAFRCNTQQPGCENVCYDKSFPISHVR) are Extracellular-facing. Disulfide bonds link cysteine 54-cysteine 192 and cysteine 187-cysteine 198. A helical membrane pass occupies residues 77–97 (FWVLQIIFVSVPTLLYLAHVF). Over 98-155 (YVMRKEEKLNKKEEELKVAQTDGVNVDMHLKQIEIKKFKYGIEEHGKVKMRGGLLRTY) the chain is Cytoplasmic. Residue lysine 144 forms a Glycyl lysine isopeptide (Lys-Gly) (interchain with G-Cter in SUMO) linkage. A helical membrane pass occupies residues 156-176 (IISILFKSIFEVAFLLIQWYI). Over 177–207 (YGFSLSAVYTCKRDPCPHQVDCFLSRPTEKT) the chain is Extracellular. The helical transmembrane segment at 208 to 228 (IFIIFMLVVSLVSLALNIIEL) threads the bilayer. Residues 229–382 (FYVFFKGVKD…SRPRPDDLEI (154 aa)) lie on the Cytoplasmic side of the membrane. Lysine 237 is covalently cross-linked (Glycyl lysine isopeptide (Lys-Gly) (interchain with G-Cter in SUMO)). The tract at residues 244 to 382 (SDPYHATSGA…SRPRPDDLEI (139 aa)) is interaction with NOV. Tyrosine 247 carries the phosphotyrosine modification. A phosphoserine mark is found at serine 255 and serine 262. Residues 264 to 382 (KYAYFNGCSS…SRPRPDDLEI (119 aa)) form an interaction with UBQLN4 region. Cysteine 271 bears the S-nitrosocysteine mark. At threonine 275 the chain carries Phosphothreonine. Residues serine 306 and serine 314 each carry the phosphoserine modification. Residues 317–332 (QNRMGQAGSTISNSHA) show a composition bias toward polar residues. Residues 317 to 382 (QNRMGQAGST…SRPRPDDLEI (66 aa)) form a disordered region. Residue serine 325 is modified to Phosphoserine; by CK1. At threonine 326 the chain carries Phosphothreonine. A phosphoserine; by CK1 mark is found at serine 328 and serine 330. Residues serine 344 and serine 365 each carry the phosphoserine modification. Low complexity predominate over residues 362 to 374 (RPSSRASSRASSR). At serine 368 the chain carries Phosphoserine; by PKC/PRKCG and PKC/PRKCD. Phosphoserine occurs at positions 369 and 373.

It belongs to the connexin family. Alpha-type (group II) subfamily. As to quaternary structure, a connexon is composed of a hexamer of connexins. Interacts (via C-terminus) with TJP1. Interacts (via C-terminus) with SRC (via SH3 domain). Interacts (not ubiquitinated) with UBQLN4 (via UBA domain). Interacts with SGSM3 and CNST. Interacts with RIC1/CIP150. Interacts with CSNK1D. Interacts with NOV. Interacts with TMEM65. Interacts with ANK3/ANKG and PKP2. In terms of processing, phosphorylated at Ser-368 by PRKCG; phosphorylation induces disassembly of gap junction plaques and inhibition of gap junction activity. Phosphorylation at Ser-325, Ser-328 and Ser-330 by CK1 modulates gap junction assembly. Phosphorylation at Ser-368 by PRKCD triggers its internalization into small vesicles leading to proteasome-mediated degradation. Post-translationally, sumoylated with SUMO1, SUMO2 and SUMO3, which may regulate the level of functional Cx43 gap junctions at the plasma membrane. May be desumoylated by SENP1 or SENP2. S-nitrosylation at Cys-271 is enriched at the muscle endothelial gap junction in arteries, it augments channel permeability and may regulate of smooth muscle cell to endothelial cell communication. In terms of processing, acetylated in the developing cortex; leading to delocalization from the cell membrane. Expressed at intercalated disks in the heart (at protein level). Expressed in the fetal cochlea.

It is found in the cell membrane. The protein resides in the cell junction. The protein localises to the gap junction. It localises to the endoplasmic reticulum. Functionally, gap junction protein that acts as a regulator of bladder capacity. A gap junction consists of a cluster of closely packed pairs of transmembrane channels, the connexons, through which materials of low MW diffuse from one cell to a neighboring cell. May play a critical role in the physiology of hearing by participating in the recycling of potassium to the cochlear endolymph. Negative regulator of bladder functional capacity: acts by enhancing intercellular electrical and chemical transmission, thus sensitizing bladder muscles to cholinergic neural stimuli and causing them to contract. May play a role in cell growth inhibition through the regulation of NOV expression and localization. Plays an essential role in gap junction communication in the ventricles. This Homo sapiens (Human) protein is Gap junction alpha-1 protein (GJA1).